The chain runs to 188 residues: Acyl-acyl carrier protein thioesterase ATL2, chloroplastic (188 aa).

Residues 1-47 (MFQATSTGAQIMHAAFPRSWRRGHVLPLRSAKIFKPLACLELRGSTG) constitute a chloroplast transit peptide. Asp64 is an active-site residue.

Belongs to the 4-hydroxybenzoyl-CoA thioesterase family. As to expression, expressed in endodermal and peridermal cells in young and mature roots, in boundaries of stem lateral organs and developing seeds.

The protein localises to the plastid. Its subcellular location is the chloroplast. In terms of biological role, acyl-ACP thioesterase involved in the production of fatty acids and beta-keto fatty acids. Can produce beta-keto fatty acids of medium chain (8:0 and 10:0) and small amounts of 8:0 fatty acid when expressed in a heterologous organism (E.coli). May play a role in suberin biosynthesis. This chain is Acyl-acyl carrier protein thioesterase ATL2, chloroplastic, found in Arabidopsis thaliana (Mouse-ear cress).